The primary structure comprises 266 residues: MKSTCYMIGILLMILQNTYQSPVPETDANSRSVKAARNEAVDDSEQLKEVKRHSQGTFTSDYSKYLDSRRAQDFVQWLMNTKRSGELSRRNADYERHAEGTFTSDVTQQLDEKAAKEFIDWLINGGPSKEIISRRNAEFERHAEGTYTNDVTEYLEEKAAKEFIEWLIKGKPKKIRYSRHAEGTFTNDMTNYLEEKAAKEFVGWLIKGRPKRNFSEVHSVEEMDRRHADGSFTNDINKVLDIIAAQEFLDWVINTQETERDLLEEQ.

The N-terminal stretch at 1-20 (MKSTCYMIGILLMILQNTYQ) is a signal peptide. 6 propeptides span residues 21-50 (SPVPETDANSRSVKAARNEAVDDSEQLKEV), 84-95 (SGELSRRNADYE), 136-140 (NAEFE), 175-178 (IRYS), 213-224 (NFSEVHSVEEMD), and 261-266 (DLLEEQ). Residues 23–32 (VPETDANSRS) show a composition bias toward polar residues. The segment at 23 to 44 (VPETDANSRSVKAARNEAVDDS) is disordered.

Belongs to the glucagon family.

It localises to the secreted. Promotes hydrolysis of glycogen and lipids, and raises the blood sugar level. This chain is Glucagon-1 (gcg1), found in Xenopus laevis (African clawed frog).